The chain runs to 29 residues: Cytochrome b6-f complex subunit 8 (29 aa).

The helical transmembrane segment at Ile3–Val23 threads the bilayer.

This sequence belongs to the PetN family. As to quaternary structure, the 4 large subunits of the cytochrome b6-f complex are cytochrome b6, subunit IV (17 kDa polypeptide, PetD), cytochrome f and the Rieske protein, while the 4 small subunits are PetG, PetL, PetM and PetN. The complex functions as a dimer.

It is found in the cellular thylakoid membrane. Its function is as follows. Component of the cytochrome b6-f complex, which mediates electron transfer between photosystem II (PSII) and photosystem I (PSI), cyclic electron flow around PSI, and state transitions. In Cyanothece sp. (strain PCC 7425 / ATCC 29141), this protein is Cytochrome b6-f complex subunit 8.